Consider the following 697-residue polypeptide: Polyribonucleotide nucleotidyltransferase (697 aa).

Mg(2+)-binding residues include aspartate 488 and aspartate 494. The KH domain occupies 555 to 614 (PTFEVITINPDKIRDVIGKGGATIRQITEETKAAIDIEDNGTVRVFGETKAAARAAIAKI). The S1 motif domain maps to 624–692 (GKIYDGKVIR…NRGRIKLSMK (69 aa)).

It belongs to the polyribonucleotide nucleotidyltransferase family. In terms of assembly, component of the RNA degradosome, which is a multiprotein complex involved in RNA processing and mRNA degradation. It depends on Mg(2+) as a cofactor.

The protein localises to the cytoplasm. The enzyme catalyses RNA(n+1) + phosphate = RNA(n) + a ribonucleoside 5'-diphosphate. Involved in mRNA degradation. Catalyzes the phosphorolysis of single-stranded polyribonucleotides processively in the 3'- to 5'-direction. The polypeptide is Polyribonucleotide nucleotidyltransferase (Acinetobacter baylyi (strain ATCC 33305 / BD413 / ADP1)).